A 77-amino-acid chain; its full sequence is U8-lycotoxin-Ls1p (77 aa).

The first 20 residues, 1-20, serve as a signal peptide directing secretion; it reads MKLMIFTGLVLFAIVSLIEA. A propeptide spanning residues 21 to 26 is cleaved from the precursor; the sequence is QAENEK.

The protein belongs to the neurotoxin 19 (CSTX) family. 08 (U8-Lctx) subfamily. Contains 4 disulfide bonds. In terms of tissue distribution, expressed by the venom gland.

It localises to the secreted. The chain is U8-lycotoxin-Ls1p from Lycosa singoriensis (Wolf spider).